The sequence spans 89 residues: Small ribosomal subunit protein uS15 (89 aa).

This sequence belongs to the universal ribosomal protein uS15 family. In terms of assembly, part of the 30S ribosomal subunit. Forms a bridge to the 50S subunit in the 70S ribosome, contacting the 23S rRNA.

One of the primary rRNA binding proteins, it binds directly to 16S rRNA where it helps nucleate assembly of the platform of the 30S subunit by binding and bridging several RNA helices of the 16S rRNA. Functionally, forms an intersubunit bridge (bridge B4) with the 23S rRNA of the 50S subunit in the ribosome. This Ligilactobacillus salivarius (strain UCC118) (Lactobacillus salivarius) protein is Small ribosomal subunit protein uS15.